The sequence spans 586 residues: A-type ATP synthase subunit A (586 aa).

An ATP-binding site is contributed by 232 to 239 (GPFGSGKT).

It belongs to the ATPase alpha/beta chains family. As to quaternary structure, has multiple subunits with at least A(3), B(3), C, D, E, F, H, I and proteolipid K(x).

It is found in the cell membrane. It carries out the reaction ATP + H2O + 4 H(+)(in) = ADP + phosphate + 5 H(+)(out). In terms of biological role, component of the A-type ATP synthase that produces ATP from ADP in the presence of a proton gradient across the membrane. The A chain is the catalytic subunit. The chain is A-type ATP synthase subunit A from Methanococcus vannielii (strain ATCC 35089 / DSM 1224 / JCM 13029 / OCM 148 / SB).